Reading from the N-terminus, the 272-residue chain is uncharacterized protein (272 aa).

A signal peptide spans 1 to 22; the sequence is MEYIKKIALYMSVLLLIIFIGG. Cys-23 carries the N-palmitoyl cysteine lipid modification. Cys-23 carries the S-diacylglycerol cysteine lipid modification.

The protein belongs to the staphylococcal tandem lipoprotein family.

The protein localises to the cell membrane. This is an uncharacterized protein from Staphylococcus aureus (strain MRSA252).